Consider the following 1265-residue polypeptide: MKVRLLRQLSAAAKVKAPSGLQGPPQAHQFISLLLEEYGALCQAARSISTFLGTLENEHLKKFQVTWELHNKHLFENLVFSEPLLQSNLPALVSQIRLGTTTHDTCSEDTYSTLLQRYQRSEEELRRVAEEWLECQKRIDAYVDEQMTMKTKQRMLTEDWELFKQRRFIEEQLTNKKAVTGENNFTDTMRHMLSSRLSMPDCPNCNYRRRCACDDCSLSHILTCGIMDPPVTDDIHIHQLPLQVDPAPDYLAERSPPSVSSASSGSGSSSPITIQQHPRLILTDSGSAPTFCSDDEDVAPLSAKFADIYPLSNYDDTEVVANMNGIHSELNGGGENMALKDESPQISSTSSSSSEADDEEADGESSGEPPGAPKEDGVLGSRSPRTEESKADSPPPSYPTQQAEQAPNTCECHVCKQEASGLTPSAMTAGALPPGHQFLSPEKPTHPALHLYPHIHGHVPLHTVPHLPRPLIHPTLYATPPFTHSKALPPAPVQNHTNKHQVFNASLQDHIYPSCFGNTPEWNSSKFISLWGSEVMNDKNWNPGTFLPDTISGSEILGPTLSETRPEALPPPSSNETPAVSDSKEKKNAAKKKCLYNFQDAFMEANKVVMATSSATSSVSCTATTVQSSNSQFRVSSKRPPSVGDVFHGISKEDHRHSAPAAPRNSPTGLAPLPALSPAALSPAALSPASTPHLANLAAPSFPKTATTTPGFVDTRKSFCPAPLPPATDGSISAPPSVCSDPDCEGHRCENGVYDPQQDDGDESADEDSCSEHSSSTSTSTNQKEGKYCDCCYCEFFGHGGPPAAPTSRNYAEMREKLRLRLTKRKEEQPKKMDQISERESVVDHRRVEDLLQFINSSETKPVSSTRAAKRARHKQRKLEEKARLEAEARAREHLHLQEEQRRREEEEDEEEEEDRFKEEFQRLQELQKLRAVKKKKKERPSKDCPKLDMLTRNFQAATESVPNSGNIHNGSLEQTEEPETSSHSPSRHMNHSEPRPGLGADGDAADPVDTRDSKFLLPKEVNGKQHEPLSFFFDIMQHHKEGNGKQKLRQTSKASSEPARRPTEPPKATEGQSKPRAQTESKAKVVDLMSITEQKREERKVNSNNNNKKQLNHIKDEKSNPTPMEPTSPGEHQQNSKLVLAESPQPKGKNKKNKKKKGDRVNNSIDGVSLLLPSLGYNGAILAHCNLRLPGSSDCAASASQVVGITDDVFLPKDIDLDSVDMDETEREVEYFKRFCLDSARQTRQRLSINWSNFSLKKATFAAH.

Residues 107 to 142 adopt a coiled-coil conformation; that stretch reads SEDTYSTLLQRYQRSEEELRRVAEEWLECQKRIDAY. The tract at residues 247 to 272 is disordered; sequence APDYLAERSPPSVSSASSGSGSSSPI. Over residues 255–271 the composition is skewed to low complexity; that stretch reads SPPSVSSASSGSGSSSP. S293 carries the post-translational modification Phosphoserine. 7 disordered regions span residues 331–407, 553–586, 626–674, 750–785, 822–841, 859–881, and 893–1163; these read NGGG…EQAP, GSEI…SKEK, VQSS…APLP, ENGV…NQKE, LTKR…ERES, ETKP…KLEE, and EHLH…DRVN. Over residues 355–365 the composition is skewed to acidic residues; it reads EADDEEADGES. S383 is modified (phosphoserine). Residue S642 is modified to Phosphoserine. A compositionally biased stretch (acidic residues) spans 757-769; sequence QQDDGDESADEDS. Low complexity predominate over residues 772-781; the sequence is EHSSSTSTST. Residues 868–877 show a composition bias toward basic residues; the sequence is AAKRARHKQR. Residues 873–932 are a coiled coil; it reads RHKQRKLEEKARLEAEARAREHLHLQEEQRRREEEEDEEEEEDRFKEEFQRLQELQKLRA. Basic and acidic residues-rich tracts occupy residues 893–905 and 915–929; these read EHLH…RRRE and DRFK…ELQK. Basic residues predominate over residues 931 to 940; sequence RAVKKKKKER. A compositionally biased stretch (polar residues) spans 953 to 973; it reads RNFQAATESVPNSGNIHNGSL. The stretch at 1093-1118 forms a coiled coil; it reads TEQKREERKVNSNNNNKKQLNHIKDE. Phosphoserine occurs at positions 1129 and 1144. The segment covering 1149–1159 has biased composition (basic residues); that stretch reads GKNKKNKKKKG.

This sequence belongs to the FAM193 family.

The chain is Protein FAM193A (FAM193A) from Homo sapiens (Human).